A 72-amino-acid polypeptide reads, in one-letter code: MKADIHPKYAEVQVTCSCGNTFETRSTLGKPALHVEVCAACHPFYTGKQKIVDTAGRVERFRQKYGNVQRLG.

The Zn(2+) site is built by Cys16, Cys18, Cys38, and Cys41.

It belongs to the bacterial ribosomal protein bL31 family. Type A subfamily. In terms of assembly, part of the 50S ribosomal subunit. The cofactor is Zn(2+).

Its function is as follows. Binds the 23S rRNA. This Aromatoleum aromaticum (strain DSM 19018 / LMG 30748 / EbN1) (Azoarcus sp. (strain EbN1)) protein is Large ribosomal subunit protein bL31.